Here is a 144-residue protein sequence, read N- to C-terminus: D-aminoacyl-tRNA deacylase (144 aa).

Positions 136–137 (GP) match the Gly-cisPro motif, important for rejection of L-amino acids motif.

This sequence belongs to the DTD family. As to quaternary structure, homodimer.

The protein localises to the cytoplasm. It catalyses the reaction glycyl-tRNA(Ala) + H2O = tRNA(Ala) + glycine + H(+). It carries out the reaction a D-aminoacyl-tRNA + H2O = a tRNA + a D-alpha-amino acid + H(+). Its function is as follows. An aminoacyl-tRNA editing enzyme that deacylates mischarged D-aminoacyl-tRNAs. Also deacylates mischarged glycyl-tRNA(Ala), protecting cells against glycine mischarging by AlaRS. Acts via tRNA-based rather than protein-based catalysis; rejects L-amino acids rather than detecting D-amino acids in the active site. By recycling D-aminoacyl-tRNA to D-amino acids and free tRNA molecules, this enzyme counteracts the toxicity associated with the formation of D-aminoacyl-tRNA entities in vivo and helps enforce protein L-homochirality. In Histophilus somni (strain 129Pt) (Haemophilus somnus), this protein is D-aminoacyl-tRNA deacylase.